Here is a 296-residue protein sequence, read N- to C-terminus: tRNA dimethylallyltransferase (296 aa).

2–9 (GPTASGKT) contacts ATP. Residue 4–9 (TASGKT) coordinates substrate. 3 interaction with substrate tRNA regions span residues 27-30 (DSAL), 151-155 (QRLSR), and 232-237 (RCVGYR).

Belongs to the IPP transferase family. In terms of assembly, monomer. Mg(2+) is required as a cofactor.

It carries out the reaction adenosine(37) in tRNA + dimethylallyl diphosphate = N(6)-dimethylallyladenosine(37) in tRNA + diphosphate. Catalyzes the transfer of a dimethylallyl group onto the adenine at position 37 in tRNAs that read codons beginning with uridine, leading to the formation of N6-(dimethylallyl)adenosine (i(6)A). This is tRNA dimethylallyltransferase from Shewanella sp. (strain MR-4).